A 109-amino-acid polypeptide reads, in one-letter code: MSISQVIDTSFHEEVINSRQPVLVDFWAPWCGPCRMIASTIDEIAHDYKDKLKVVKVNTDQNPTIATEYGIRSIPTVMIFINGKKVDTVVGAVPKLTLLNTLQKHLKST.

Positions 2-107 (SISQVIDTSF…LLNTLQKHLK (106 aa)) constitute a Thioredoxin domain. Residues cysteine 31 and cysteine 34 each act as nucleophile in the active site. Cysteine 31 and cysteine 34 are oxidised to a cystine.

It belongs to the thioredoxin family.

It localises to the plastid. The protein resides in the chloroplast. In terms of biological role, participates in various redox reactions through the reversible oxidation of its active center dithiol to a disulfide and catalyzes dithiol-disulfide exchange reactions. The protein is Thioredoxin (trxA) of Griffithsia pacifica (Red alga).